The chain runs to 87 residues: Cell division topological specificity factor (87 aa).

The protein belongs to the MinE family.

Prevents the cell division inhibition by proteins MinC and MinD at internal division sites while permitting inhibition at polar sites. This ensures cell division at the proper site by restricting the formation of a division septum at the midpoint of the long axis of the cell. The protein is Cell division topological specificity factor of Roseiflexus sp. (strain RS-1).